Here is a 287-residue protein sequence, read N- to C-terminus: 4-diphosphocytidyl-2-C-methyl-D-erythritol kinase (287 aa).

The active site involves K12. 97-107 (PMGGGLGGGSS) serves as a coordination point for ATP. The active site involves D139.

It belongs to the GHMP kinase family. IspE subfamily.

The catalysed reaction is 4-CDP-2-C-methyl-D-erythritol + ATP = 4-CDP-2-C-methyl-D-erythritol 2-phosphate + ADP + H(+). Its pathway is isoprenoid biosynthesis; isopentenyl diphosphate biosynthesis via DXP pathway; isopentenyl diphosphate from 1-deoxy-D-xylulose 5-phosphate: step 3/6. In terms of biological role, catalyzes the phosphorylation of the position 2 hydroxy group of 4-diphosphocytidyl-2C-methyl-D-erythritol. This is 4-diphosphocytidyl-2-C-methyl-D-erythritol kinase from Marinobacter nauticus (strain ATCC 700491 / DSM 11845 / VT8) (Marinobacter aquaeolei).